A 323-amino-acid chain; its full sequence is Polycomb complex protein BMI-1-B (323 aa).

The RING-type zinc finger occupies 18 to 57 (CVLCGGYFIDAATIIECLHSFCKTCIVRYLETSKYCPICD). Residues 81 to 95 (KLVPGLFKGEMKRRR) carry the Nuclear localization signal motif. A disordered region spans residues 238-310 (PHTDRINNTS…HQNPFANRAR (73 aa)). The segment covering 287–301 (HISSTINGTNSSSSH) has biased composition (low complexity).

Component of a PRC1-like complex. Interacts with cbx4.

Its subcellular location is the nucleus. Component of a Polycomb group (PcG) multiprotein PRC1-like complex, a complex class required to maintain the transcriptionally repressive state of many genes, including Hox genes, throughout development. PcG PRC1 complex acts via chromatin remodeling and modification of histones; it mediates monoubiquitination of histone H2A 'Lys-119', rendering chromatin heritably changed in its expressibility. In the PRC1 complex, it is required to stimulate the E3 ubiquitin-protein ligase activity of rnf2. The chain is Polycomb complex protein BMI-1-B (bmi1b) from Xenopus laevis (African clawed frog).